Consider the following 500-residue polypeptide: MKEKYILSIDEGTTSTRAIIFDHNGNEIVSAQKEITQYFPEPGWVEHDANEIWMAVQTTIANAFIQSGIWPGQIAAIGITNQRETAVVWDKDTGKPIYHAIVWQSRQTTDLAEKLKKDGYSNLIREKTGLIVDPYFSATKIRWILDHVPGAQEKAEQGKLLFGTIDSWLVWKLTDGQKHVTDYTNASRTMLFNIHTLKWDKEILNLLNIPEKMLPEVRSNSEVYGTTASYMFFGGEVSIAGMAGDQQAALFGQLALKPGMVKNTYGTGAFIVMNTGDKPTTSNNNLLTTIGYGINGKITYALEGSIFVAGSAIQWLRDSMKLIKNAPDSEKAAYESTSENEVYVVPAFTGLGAPYWDAEARGAIFGVTRGTTDKDMIKATLQSLAYQTRDVVDTMQKDSGIDIPALRVDGGASNNNYLMQFQADILGKKIERTKVLETTSMGAAFLAGLAVGYWKNIDELKHVFTIGQAFEPKMGDLERKKLYDGWQRAIKATRVFAHGE.

Position 13 (Thr13) interacts with ADP. ATP-binding residues include Thr13, Thr14, and Ser15. Position 13 (Thr13) interacts with sn-glycerol 3-phosphate. Residue Arg17 participates in ADP binding. Residues Arg83, Glu84, Tyr135, and Asp245 each contribute to the sn-glycerol 3-phosphate site. Residues Arg83, Glu84, Tyr135, Asp245, and Gln246 each coordinate glycerol. Residues Thr267 and Gly310 each coordinate ADP. Residues Thr267, Gly310, Gln314, and Gly411 each coordinate ATP. Residues Gly411 and Asn415 each coordinate ADP.

The protein belongs to the FGGY kinase family. In terms of assembly, homotetramer and homodimer (in equilibrium).

It carries out the reaction glycerol + ATP = sn-glycerol 3-phosphate + ADP + H(+). It functions in the pathway polyol metabolism; glycerol degradation via glycerol kinase pathway; sn-glycerol 3-phosphate from glycerol: step 1/1. Activated by phosphorylation and inhibited by fructose 1,6-bisphosphate (FBP). In terms of biological role, key enzyme in the regulation of glycerol uptake and metabolism. Catalyzes the phosphorylation of glycerol to yield sn-glycerol 3-phosphate. The chain is Glycerol kinase from Lactobacillus acidophilus (strain ATCC 700396 / NCK56 / N2 / NCFM).